Consider the following 330-residue polypeptide: NADH-quinone oxidoreductase subunit H (330 aa).

Helical transmembrane passes span 5 to 25, 44 to 64, 78 to 98, 122 to 142, 156 to 176, 192 to 212, 240 to 260, 271 to 293, and 310 to 330; these read LFFI…IACL, IGPD…MIKL, FIFL…LAPI, VLYV…AGLA, VMGL…VIMI, IFGW…MASF, MRWA…SIVI, FWFV…FFLW, and CWKI…IALI.

Belongs to the complex I subunit 1 family. NDH-1 is composed of 14 different subunits. Subunits NuoA, H, J, K, L, M, N constitute the membrane sector of the complex.

It localises to the cell inner membrane. It carries out the reaction a quinone + NADH + 5 H(+)(in) = a quinol + NAD(+) + 4 H(+)(out). NDH-1 shuttles electrons from NADH, via FMN and iron-sulfur (Fe-S) centers, to quinones in the respiratory chain. The immediate electron acceptor for the enzyme in this species is believed to be ubiquinone. Couples the redox reaction to proton translocation (for every two electrons transferred, four hydrogen ions are translocated across the cytoplasmic membrane), and thus conserves the redox energy in a proton gradient. This subunit may bind ubiquinone. In Campylobacter curvus (strain 525.92), this protein is NADH-quinone oxidoreductase subunit H.